We begin with the raw amino-acid sequence, 261 residues long: Claudin-18 (261 aa).

Residues 1-6 (MATTTC) are Cytoplasmic-facing. A helical transmembrane segment spans residues 7 to 27 (QVVGLLLSLLGLAGCIAATGM). The Extracellular portion of the chain corresponds to 28-80 (DMWSTQDLYDNPVTSVFQYEGLWRSCVQQSSGFTECRPYFTILGLPAMLQAVR). The helical transmembrane segment at 81 to 101 (ALMIVGIVLGVIGILVSIFAL) threads the bilayer. At 102–122 (KCIRIGSMDDSAKAKMTLTSG) the chain is on the cytoplasmic side. Residues 123–143 (IMFIISGVCAIIGVSVFANML) traverse the membrane as a helical segment. Residues 144 to 173 (VTNFWMSTANMYSGMGGMVQTVQTRYTFGA) lie on the Extracellular side of the membrane. Residues 174–194 (ALFVGWIAGGLTLIGGVMMCI) traverse the membrane as a helical segment. Residues 195–261 (ACRGLTPDDR…QSHPTKYDYV (67 aa)) are Cytoplasmic-facing. The tract at residues 195–261 (ACRGLTPDDR…QSHPTKYDYV (67 aa)) is required for role in regulation of RANKL-induced osteoclast differentiation. S214 bears the Phosphoserine mark. The segment at 242–261 (DGGARTEDDEQSHPTKYDYV) is disordered.

It belongs to the claudin family. Interacts with TJP2/ZO-2. Interacts with TJP1/ZO-1. Interacts with YAP1 (phosphorylated); the interaction sequesters YAP1 away from the nucleus and thereby restricts transcription of YAP1 target genes. Interacts with CLDN19. As to expression, expressed in the lung (at protein level).

It localises to the cell junction. The protein localises to the tight junction. Its subcellular location is the cell membrane. Its function is as follows. Involved in alveolar fluid homeostasis via regulation of alveolar epithelial tight junction composition and therefore ion transport and solute permeability, potentially via downstream regulation of the actin cytoskeleton organization and beta-2-adrenergic signaling. Required for lung alveolarization and maintenance of the paracellular alveolar epithelial barrier. Acts to maintain epithelial progenitor cell proliferation and organ size, via regulation of YAP1 localization away from the nucleus and thereby restriction of YAP1 target gene transcription. Acts as a negative regulator of RANKL-induced osteoclast differentiation, potentially via relocation of TJP2/ZO-2 away from the nucleus, subsequently involved in bone resorption in response to calcium deficiency. Mediates the osteoprotective effects of estrogen, potentially via acting downstream of estrogen signaling independently of RANKL signaling pathways. Functionally, required for the formation of the gastric paracellular barrier via its role in tight junction formation, thereby involved in the response to gastric acidification. The polypeptide is Claudin-18 (Rattus norvegicus (Rat)).